The sequence spans 2053 residues: MWLVTFLLLLDSLHKARPEDVGTSLYFVNDSLQHVTFSSSVGVVVPCPAAGSPSAALRWYLATGDDIYDVPHIRHVHANGTLQLFPFSPSAFNSFIHDNDYFCTAENAAGKIRSPNIRIKAVFREPYTVRVEDQRSMRGNVAVFKCLIPSSVQEYVSVVSWEKDTVSITPENRFFITSHGGLYISDVQKEDALSTYRCITQHKYSGETRQSNGARLSVTDPAESIPTILDGFHSQEVWTGHSVELPCAASGYPIPAIRWLKDGRPLPADSRWAKRITGLTISDLRTEDSGTYICEVTNTFGSAEANGILTVIDPLHVTLTPKKLKTGIGSTVILSCALTGSPEFTIRWYRNTELVLPGEAISIRGLSNETLLISSAQKSHSGAYQCFATRKAQTAQDFAIIVLEDGTPRIVSSFSEKVVNPGEQFSLMCAAKGAPPPTVTWALDDEPVVRDGSHRTNQYTMSDGTTISHMNVTGPQIRDGGVYRCTARNSVGSAEYQARINVRGPPSIRAMRNITAVAGRDTLINCRVIGYPYYSIKWYKDALLLPDNHRQVVFENGTLKLTDVQKGMDEGEYLCSVLIQPQLSISQSVHVAVKVPPLIQPFEFPPASIGQLLYIPCVVSSGDMPIRITWRKDGQVIISGSGVTIESKEFMSSLQISSVSLKHNGNYTCIASNAAATVSRERQLIVRVPPRFVVQPNNQDGIYGKAGVLNCSVDGYPPPKVMWKHAKGSGNPQQYHPVPLTGRIQILPNSSLLIRHVLEEDIGYYLCQASNGVGTDISKAMFLTVKIPAMITSHPNTTIAIKGHPKELNCTARGERPIIIRWEKGDTVIDPDRVMRYAIATKDNGDEVVSTLKLKPADRGDSVFFSCHAINSYGEDRGLIQLTVQEPPDPPELEIREVKARSMNLRWTQRFDGNSIITGFDIEYKNKSDSWDFKQSTRNISPTINQANIVDLHPASVYSIRMYSFNKIGRSEPSKELTISTEEAAPDGPPMDVTLQPVTSQSIQVTWKAPKKELQNGVIRGYQIGYRENSPGSNGQYSIVEMKATGDSEVYTLDNLKKFAQYGVVVQAFNRAGTGPSSSEINATTLEDVPSQPPENVRALSITSDVAVISWSEPPRSTLNGVLKGYRVIFWSLYVDGEWGEMQNVTTTRERVELRGMEKFTNYSVQVLAYTQAGDGVRSSVLYIQTKEDVPGPPAGIKAVPSSASSVVVSWLPPTKPNGVIRKYTIFCSSPGSGQPAPSEYETSPEQLFYRIAHLNRGQQYLLWVAAVTSAGRGNSSEKVTIEPAGKAPAKIISFGGTVTTPWMKDVRLPCNSVGDPAPAVKWTKDSEDSAIPVSLDGHRLIHTNGTLLLRAVKAEDSGYYTCTATNTGGFDTIIVNLLVQVPPDQPRLTVSKTSASSITLTWIPGDNGGSSIRGFVLQYSVDNSEEWKDVFISSSERSFKLDSLKCGTWYKVKLAAKNSVGSGRISEIIEAKTHGREPSFSKDQHLFTHINSTHARLNLQGWNNGGCPITAIVLEYRPKGTWAWQGVRANSSTEVFLTELREATWYELRMRACNSAGCGNETAQFATLDYDGSTIPPIKSAQGEGDDVKKLFTIGCPVILATLGVALLFVVRKKRKEKRLKRLRDAKSLAEMLISKNNRSFDTPVKGPPQGPRLHIDIPRVQLLIEDKEGIKQLGDDKATIPVTDAEFSQAVNPQSFCTGVSLHHPALIQSTGPLIDMSDIRPGTNPVSRKNVKSAHSTRNRYSSQWTLTKCQASTPARTLTSDWRTVGSQHGVTVTESDSYSASLSQDTDKGRNSMVSTESASSTYEELARAYEHAKLEEQLQHAKFEITECFISDSSSDQMTTGTNENADSMTSMSTPSEPGICRFTASPPKPQDADRGKNVAVPIPHRANKSDYCNLPLYTKSEAFFRKADGREPCPVVPPREASMRNLTRAYHTQARHLTLDPASKPLGLPHPGATAATATATLPQRTLAMPAPPAGTAPPAPGPTPSEPSAAPSAAPPAPSTEPPRAGGPHTKMGGSRDSLLEMSTPGVGRSQKQGAGAYSKSYTLV.

An N-terminal signal peptide occupies residues 1-18 (MWLVTFLLLLDSLHKARP). 9 Ig-like C2-type domains span residues 19-119 (EDVG…NIRI), 115-217 (PNIR…ARLS), 226-310 (PTIL…GILT), 314-396 (PLHV…QTAQ), 408-501 (PRIV…ARIN), 506-586 (PSIR…LSIS), 596-685 (PPLI…RQLI), 690-784 (PRFV…MFLT), and 788-885 (PAMI…LTVQ). Over 19–1591 (EDVGTSLYFV…AQGEGDDVKK (1573 aa)) the chain is Extracellular. Cystine bridges form between C47–C103, C146–C198, C247–C294, C336–C386, C429–C485, C526–C575, and C617–C669. N79 is a glycosylation site (N-linked (GlcNAc...) asparagine). N368 and N471 each carry an N-linked (GlcNAc...) asparagine glycan. N666 and N710 each carry an N-linked (GlcNAc...) asparagine glycan. A disulfide bridge connects residues C711 and C767. The N-linked (GlcNAc...) asparagine glycan is linked to N809. A disulfide bond links C810 and C867. Fibronectin type-III domains lie at 887 to 984 (PPDP…TEEA), 989 to 1088 (PPMD…TLED), 1093 to 1189 (PPEN…TKED), and 1193 to 1288 (PPAG…AGKA). Residues N1144 and N1162 are each glycosylated (N-linked (GlcNAc...) asparagine). In terms of domain architecture, Ig-like C2-type 10 spans 1278-1377 (EKVTIEPAGK…TGGFDTIIVN (100 aa)). Cysteines 1311 and 1363 form a disulfide. The N-linked (GlcNAc...) asparagine glycan is linked to N1345. 2 Fibronectin type-III domains span residues 1383–1477 (PPDQ…THGR) and 1478–1578 (EPSF…TIPP). The N-linked (GlcNAc...) asparagine glycan is linked to N1561. The helical transmembrane segment at 1592–1612 (LFTIGCPVILATLGVALLFVV) threads the bilayer. The Cytoplasmic segment spans residues 1613–2053 (RKKRKEKRLK…GAYSKSYTLV (441 aa)). Disordered stretches follow at residues 1716 to 1741 (LIDMSDIRPGTNPVSRKNVKSAHSTR), 1773 to 1803 (HGVTVTESDSYSASLSQDTDKGRNSMVSTES), 1840 to 1862 (SSDQMTTGTNENADSMTSMSTPS), and 1974 to 2053 (LAMP…YTLV). Positions 1732–1741 (KNVKSAHSTR) are enriched in basic residues. A compositionally biased stretch (polar residues) spans 1773–1789 (HGVTVTESDSYSASLSQ). Over residues 1977–1993 (PAPPAGTAPPAPGPTPS) the composition is skewed to pro residues.

As to quaternary structure, homodimer; mediates homophilic interactions to promote cell adhesion. In terms of tissue distribution, in the retina, expressed in the rod photoreceptors, AII amacrine cells and rod bipolar cells (at protein level).

It is found in the cell membrane. Its subcellular location is the synapse. In terms of biological role, cell adhesion molecule that plays a role in neuronal self-avoidance. Promotes repulsion between specific neuronal processes of either the same cell or the same subtype of cells. Promotes both isoneuronal self-avoidance for creating an orderly neurite arborization in retinal rod bipolar cells and heteroneuronal self-avoidance to maintain mosaic spacing between AII amacrine cells. Adhesion molecule that promotes lamina-specific synaptic connections in the retina: expressed in specific subsets of interneurons and retinal ganglion cells (RGCs) and promotes synaptic connectivity via homophilic interactions. This is Cell adhesion molecule DSCAML1 (Dscaml1) from Mus musculus (Mouse).